A 265-amino-acid chain; its full sequence is O-methyltransferase NEC2 (265 aa).

Belongs to the methyltransferase superfamily.

It carries out the reaction desmethylnectriapyrone + S-adenosyl-L-methionine = nectriapyrone + S-adenosyl-L-homocysteine + H(+). In terms of biological role, O-methyltransferase; part of the gene cluster that mediates the biosynthesis of nectriapyrone and its analogs phomopyrone A, acropyrone and zaepyrone. The nectriapyrone biosynthetic gene cluster consists of two genes, the highly reducing polyketide synthase NEC1 that produces a demethylated analog of nectriapyrone from one unit of acetyl-CoA and one unit of malonyl-CoA; and the O-methyltransferase NEC2 that further methylates the NEC1 product to yield nectriapyrone. Nectriapyrone is further hydrolyzed to nectriapyrone D, also known as gulypyrone B, by an unidentified hydrolase localized outside the nectriapyrone cluster. The sequence is that of O-methyltransferase NEC2 from Pyricularia oryzae (strain 70-15 / ATCC MYA-4617 / FGSC 8958) (Rice blast fungus).